The chain runs to 519 residues: Serine/threonine-protein kinase RIO1 (519 aa).

Residues 1–10 (MTPAPEPQDP) are compositionally biased toward pro residues. The tract at residues 1–54 (MTPAPEPQDPPTIHEPVATEQTDDISDWDVESDYEDGYGAPSKSQAQGGASAAD) is disordered. Acidic residues predominate over residues 21–36 (QTDDISDWDVESDYED). Low complexity predominate over residues 39-53 (GAPSKSQAQGGASAA). Residues 122 to 519 (SEIYGTISTG…KLVAANKKRK (398 aa)) enclose the Protein kinase domain. ATP contacts are provided by Lys154 and Leu228. Asp281 acts as the Proton acceptor in catalysis. The Mg(2+) site is built by Asn286 and Asp298. The active-site 4-aspartylphosphate intermediate is the Asp298. The disordered stretch occupies residues 418-519 (ADSKVPESTG…KLVAANKKRK (102 aa)). Over residues 439–464 (GSEDEEGDEGESGEVESGDEEREEGE) the composition is skewed to acidic residues. An association with (pre-)40S ribosomal particle region spans residues 440–519 (SEDEEGDEGE…KLVAANKKRK (80 aa)). Basic residues-rich tracts occupy residues 470-489 (KKRPRGKKHLDKAEKHAHKM) and 497-519 (EKRKEKMPKHVKKKLVAANKKRK).

The protein belongs to the protein kinase superfamily. RIO-type Ser/Thr kinase family. It depends on Mg(2+) as a cofactor. Autophosphorylated.

The protein resides in the cytoplasm. The catalysed reaction is L-seryl-[protein] + ATP = O-phospho-L-seryl-[protein] + ADP + H(+). It carries out the reaction L-threonyl-[protein] + ATP = O-phospho-L-threonyl-[protein] + ADP + H(+). The enzyme catalyses ATP + H2O = ADP + phosphate + H(+). Involved in the final steps of cytoplasmic maturation of the 40S ribosomal subunit. In vitro, has strong ATPase activity and only low protein kinase activity. The protein is Serine/threonine-protein kinase RIO1 of Chaetomium thermophilum (strain DSM 1495 / CBS 144.50 / IMI 039719) (Thermochaetoides thermophila).